The sequence spans 24 residues: Brevinin-1SPc (24 aa).

Cys18 and Cys24 form a disulfide bridge.

Expressed by the skin glands.

It is found in the secreted. Its function is as follows. Antimicrobial peptide with activity against Gram-negative and Gram-positive bacteria and fungi. Also shows hemolytic activity. The protein is Brevinin-1SPc of Lithobates septentrionalis (Mink frog).